We begin with the raw amino-acid sequence, 134 residues long: RxLR effector protein Avh238 (134 aa).

Residues 1-21 form the signal peptide; that stretch reads MRGVFFVAVAVAIFARSSAEA. The short motif at 44-68 is the RxLR-dEER element; it reads RFLRVADSEDDDLAAPADDGKTEER. Residues 50–72 are disordered; it reads DSEDDDLAAPADDGKTEERAPKF. A compositionally biased stretch (basic and acidic residues) spans 61 to 70; that stretch reads DDGKTEERAP.

This sequence belongs to the RxLR effector family.

Its subcellular location is the secreted. It is found in the host cytoplasm. It localises to the host nucleus. In terms of biological role, effector that, due to the lack of a histidine residue at position 79, is not able to induce cell death in tomato, tobacco, eggplant, potato, or in A.thaliana. The protein is RxLR effector protein Avh238 of Phytophthora sojae (Soybean stem and root rot agent).